The following is a 420-amino-acid chain: MTTQLLEDITHRGLVSQVSDLAQLEQLLATSQVVYCGFDPTAGSLHIGHLVPLLMLKRFNDAGHKAVALIGGATGLIGDPSFKATERSLNSKETVQGWVADLSSQVESVMNPHLSEPIQLKNNADWFSGIEVLDFFRDVGKHFSINNMINRESVKQRLQRPDQGLSFTEFSYTLLQSYDFAKLNSELGCSVQIGGNDQWGNIVSGIDLTRRLNKQTVYGLTLPLITKSDGTKFGKTEGGAIWLDPKKTSPYRFYQFWLNCDDADVYNFLRFYTFLSVKEIEAIEANDITSQQKPQAQGILAEQLTRFVHGEQGLASAQRITQLLFNGQVQTLTLAELEQLEQDGLAVHAISDAKINIAELLVKSELASSKRTARELINANAIKINGEAITDEHAQLDFPLFDRFWVMQRGKKQFRLIKLA.

Tyrosine 35 lines the L-tyrosine pocket. A 'HIGH' region motif is present at residues 40-49; that stretch reads PTAGSLHIGH. L-tyrosine-binding residues include tyrosine 172 and glutamine 176. A 'KMSKS' region motif is present at residues 232-236; the sequence is KFGKT. Position 235 (lysine 235) interacts with ATP. In terms of domain architecture, S4 RNA-binding spans 355–419; sequence INIAELLVKS…GKKQFRLIKL (65 aa).

The protein belongs to the class-I aminoacyl-tRNA synthetase family. TyrS type 1 subfamily. As to quaternary structure, homodimer.

The protein localises to the cytoplasm. The enzyme catalyses tRNA(Tyr) + L-tyrosine + ATP = L-tyrosyl-tRNA(Tyr) + AMP + diphosphate + H(+). Its function is as follows. Catalyzes the attachment of tyrosine to tRNA(Tyr) in a two-step reaction: tyrosine is first activated by ATP to form Tyr-AMP and then transferred to the acceptor end of tRNA(Tyr). The chain is Tyrosine--tRNA ligase 1 from Pseudoalteromonas translucida (strain TAC 125).